The sequence spans 236 residues: Ubiquitin carboxyl-terminal hydrolase YUH1 (236 aa).

The UCH catalytic domain occupies 7–233 (AVVPIESNPE…LNFAMLGLGP (227 aa)). An interaction with ubiquitin region spans residues 10–15 (PIESNP). The active-site Nucleophile is the Cys-90. Positions 149-157 (FSTGQSEAP) are interaction with ubiquitin. His-166 (proton donor) is an active-site residue. Positions 219-228 (NEEDVLNFAM) are interaction with ubiquitin.

The protein belongs to the peptidase C12 family.

The catalysed reaction is Thiol-dependent hydrolysis of ester, thioester, amide, peptide and isopeptide bonds formed by the C-terminal Gly of ubiquitin (a 76-residue protein attached to proteins as an intracellular targeting signal).. Its function is as follows. Deubiquitinating enzyme (DUB) that controls levels of cellular ubiquitin through processing of ubiquitin precursors and ubiquitinated proteins. Thiol protease that recognizes and hydrolyzes a peptide bond at the C-terminal glycine of either ubiquitin or RUB1. Preferentially cleaves ubiquitin from peptides and small adducts. In Saccharomyces cerevisiae (strain ATCC 204508 / S288c) (Baker's yeast), this protein is Ubiquitin carboxyl-terminal hydrolase YUH1 (YUH1).